We begin with the raw amino-acid sequence, 210 residues long: Probable GTP-binding protein EngB (210 aa).

The 175-residue stretch at T25 to E199 folds into the EngB-type G domain. GTP is bound by residues G33–S40, G60–L64, D78–G81, T145–D148, and F178–S180. Mg(2+) contacts are provided by S40 and T62.

The protein belongs to the TRAFAC class TrmE-Era-EngA-EngB-Septin-like GTPase superfamily. EngB GTPase family. It depends on Mg(2+) as a cofactor.

In terms of biological role, necessary for normal cell division and for the maintenance of normal septation. In Escherichia coli O157:H7, this protein is Probable GTP-binding protein EngB.